Here is an 83-residue protein sequence, read N- to C-terminus: Keratin-associated protein 6-1 (83 aa).

An RPT 1-1 repeat occupies 9–15 (YGGLGCG). One copy of the RPT 1-2 repeat lies at 19-25 (YGGLGCG). The stretch at 44–55 (GYGYGSRSLCGS) is one RPT 2-1 repeat. Residues 56-67 (GYGYGSRSLCGS) form an RPT 2-2 repeat.

The protein belongs to the KRTAP type 6 family. Interacts with wool keratins.

In terms of biological role, in the wool cortex, wool keratin intermediate filaments are embedded in an interfilamentous matrix, consisting of hair keratin-associated proteins (KRTAP), which are essential for the formation of a rigid and resistant wool shaft through their extensive disulfide bond cross-linking with abundant cysteine residues of wool keratins. The matrix proteins include the high-sulfur and high-glycine-tyrosine keratins. The chain is Keratin-associated protein 6-1 (KRTAP6-1) from Ovis aries (Sheep).